Reading from the N-terminus, the 196-residue chain is Nucleoside triphosphate pyrophosphatase (196 aa).

Asp73 (proton acceptor) is an active-site residue.

This sequence belongs to the Maf family. Requires a divalent metal cation as cofactor.

The protein resides in the cytoplasm. It carries out the reaction a ribonucleoside 5'-triphosphate + H2O = a ribonucleoside 5'-phosphate + diphosphate + H(+). The enzyme catalyses a 2'-deoxyribonucleoside 5'-triphosphate + H2O = a 2'-deoxyribonucleoside 5'-phosphate + diphosphate + H(+). In terms of biological role, nucleoside triphosphate pyrophosphatase. May have a dual role in cell division arrest and in preventing the incorporation of modified nucleotides into cellular nucleic acids. The polypeptide is Nucleoside triphosphate pyrophosphatase (Anaplasma marginale (strain Florida)).